The sequence spans 488 residues: UDP-N-acetylmuramate--L-alanine ligase (488 aa).

Residue 129–135 coordinates ATP; the sequence is GSHGKTT.

Belongs to the MurCDEF family.

Its subcellular location is the cytoplasm. The catalysed reaction is UDP-N-acetyl-alpha-D-muramate + L-alanine + ATP = UDP-N-acetyl-alpha-D-muramoyl-L-alanine + ADP + phosphate + H(+). The protein operates within cell wall biogenesis; peptidoglycan biosynthesis. In terms of biological role, cell wall formation. The protein is UDP-N-acetylmuramate--L-alanine ligase of Prochlorococcus marinus (strain MIT 9303).